The sequence spans 616 residues: Membrane protein insertase YidC (616 aa).

The chain crosses the membrane as a helical span at residues 8–28 (MFVAIALSLVVLLGWHYFVTG). The interval 33–85 (RQRQAAQSQTAQTGAPQTADGIPSPSPREGGPNAPAPGTLPGAAAQGPVSRED) is disordered. 2 stretches are compositionally biased toward low complexity: residues 36–51 (QAAQSQTAQTGAPQTA) and 62–80 (GGPNAPAPGTLPGAAAQGP). A run of 4 helical transmembrane segments spans residues 386–406 (LLGNFGVSILLVTLILKLFFL), 460–480 (WPVLIQIPVFFALYKVLFITI), 516–536 (YIPIHLGVWPIIMGITMFIQM), and 551–571 (FAFMPIVFTFMLGSFPAGLVI).

Belongs to the OXA1/ALB3/YidC family. Type 1 subfamily. As to quaternary structure, interacts with the Sec translocase complex via SecD. Specifically interacts with transmembrane segments of nascent integral membrane proteins during membrane integration.

It localises to the cell inner membrane. Required for the insertion and/or proper folding and/or complex formation of integral membrane proteins into the membrane. Involved in integration of membrane proteins that insert both dependently and independently of the Sec translocase complex, as well as at least some lipoproteins. Aids folding of multispanning membrane proteins. This chain is Membrane protein insertase YidC, found in Methylorubrum extorquens (strain PA1) (Methylobacterium extorquens).